The following is a 503-amino-acid chain: Diels-Alderase cghA (503 aa).

The protein belongs to the Diels-Alderase family.

It carries out the reaction (2S)-3-[(2S)-3,5-dioxo-4-[(2E,4R,6R,8E,10E,12E)-4,6,12-trimethyltetradeca-2,8,10,12-tetraenoyl]pyrrolidin-2-yl]-2-hydroxy-2-methylpropanoate = sch 210972. It participates in secondary metabolite biosynthesis. Diels-Alderase; part of the gene cluster that mediates the biosynthesis of the tetramic acid Sch210972, a potential anti-HIV fungal natural product that contains a decalin core. The PKS module of cghG together with the enoylreductase cghC catalyze the formation of the polyketide unit which is then conjugated to 4-hydroxyl-4-methyl glutamate (HMG) by the condensation domain of the cghG NRPS module. One unique structural feature of Sch210972 is the tetramic acid motif proposed to be derived from the non-proteinogenic amino acid HMG, by a Dieckmann-type condensation catalyzed by the reductase domain of cghG. The aldolase cghB catalyzes the aldol condensation of 2 molecules of pyruvic acid to yield the intermediate 4-hydroxyl-4-methyl-2-oxoglutarate (HMOG), which can then be stereoselectively transaminated by an unidentified enzyme to form HMG. The Diels-Alderase cghA then uses the Dieckmann product released by cghG as substrate and catalyzes the Diels-Alder cycloaddition to form the decalin ring of Sch210972. CghA also suppresses the nonenzymatic formation of the alternative stereoisomer. The protein is Diels-Alderase cghA of Chaetomium globosum (strain ATCC 6205 / CBS 148.51 / DSM 1962 / NBRC 6347 / NRRL 1970) (Soil fungus).